Here is a 133-residue protein sequence, read N- to C-terminus: uncharacterized protein (133 aa).

Belongs to the mimivirus L15/L51/R83 family.

This is an uncharacterized protein from Acanthamoeba polyphaga (Amoeba).